The chain runs to 377 residues: Chaperone protein DnaJ (377 aa).

The J domain occupies 5–70 (DYYEVLGVSR…DKKAAYDQFG (66 aa)). The segment at 133 to 211 (GLTKELRIPT…CHGDGRVEKS (79 aa)) adopts a CR-type zinc-finger fold. Cys146, Cys149, Cys163, Cys166, Cys185, Cys188, Cys199, and Cys202 together coordinate Zn(2+). CXXCXGXG motif repeat units follow at residues 146–153 (CDLCEGSG), 163–170 (CGTCHGQG), 185–192 (CPTCHGRG), and 199–206 (CSKCHGDG).

It belongs to the DnaJ family. In terms of assembly, homodimer. It depends on Zn(2+) as a cofactor.

The protein localises to the cytoplasm. Functionally, participates actively in the response to hyperosmotic and heat shock by preventing the aggregation of stress-denatured proteins and by disaggregating proteins, also in an autonomous, DnaK-independent fashion. Unfolded proteins bind initially to DnaJ; upon interaction with the DnaJ-bound protein, DnaK hydrolyzes its bound ATP, resulting in the formation of a stable complex. GrpE releases ADP from DnaK; ATP binding to DnaK triggers the release of the substrate protein, thus completing the reaction cycle. Several rounds of ATP-dependent interactions between DnaJ, DnaK and GrpE are required for fully efficient folding. Also involved, together with DnaK and GrpE, in the DNA replication of plasmids through activation of initiation proteins. The chain is Chaperone protein DnaJ from Shewanella baltica (strain OS195).